A 222-amino-acid polypeptide reads, in one-letter code: Physcion biosynthesis cluster O-methyltransferase (222 aa).

This sequence belongs to the methyltransferase superfamily.

It carries out the reaction emodin + S-adenosyl-L-methionine = physcion + S-adenosyl-L-homocysteine. The protein operates within secondary metabolite biosynthesis. Functionally, O-methyltransferase; part of the gene cluster that mediates the biosynthesis of physcion, a natural anthraquinone fungicide that can prevent plant fungal infections. Within the pathway, the O-methyltransferase AcOMT catalyzes the last step by transferring a methyl group to C-6 hydroxyl of emodin to form physcion. AcOMT may also methylate the C-6 hydroxyl group of emodin anthrone to produce physcion-anthrone B. The pathway begins with the polyketide synthase AcPKS that condenses 8 malonyl-CoA units to synthesize atrochrysone thioester which is released from the synthase by the atrochrysone carboxyl ACP thioesterase AcTE that breaks the thioester bond and leads to free atrochrysone carboxylic acid. Spontaneous decarboxylation of atrochrysone carboxylic acid leads to the formation of atrochrysone. Then, atrochrysone undergoes spontaneous dehydration and oxidation, giving the products emodin anthrone and emodin. The O-methyltransferase AcOMT then methylates the C-6 hydroxyl of emodin to form physcion. This is Physcion biosynthesis cluster O-methyltransferase from Aspergillus chevalieri (Eurotium chevalieri).